The sequence spans 100 residues: MSVDKETVAKIASLARIKMTDAELEKMAPELSNILDWVEQLGEVDTSDVEPMTAVIPNTLRLREDEVNADPLTGGGVRDKVLANAPAAEHGFFGVPKVIE.

This sequence belongs to the GatC family. In terms of assembly, heterotrimer of A, B and C subunits.

The catalysed reaction is L-glutamyl-tRNA(Gln) + L-glutamine + ATP + H2O = L-glutaminyl-tRNA(Gln) + L-glutamate + ADP + phosphate + H(+). The enzyme catalyses L-aspartyl-tRNA(Asn) + L-glutamine + ATP + H2O = L-asparaginyl-tRNA(Asn) + L-glutamate + ADP + phosphate + 2 H(+). Functionally, allows the formation of correctly charged Asn-tRNA(Asn) or Gln-tRNA(Gln) through the transamidation of misacylated Asp-tRNA(Asn) or Glu-tRNA(Gln) in organisms which lack either or both of asparaginyl-tRNA or glutaminyl-tRNA synthetases. The reaction takes place in the presence of glutamine and ATP through an activated phospho-Asp-tRNA(Asn) or phospho-Glu-tRNA(Gln). The chain is Aspartyl/glutamyl-tRNA(Asn/Gln) amidotransferase subunit C from Erythrobacter litoralis (strain HTCC2594).